A 434-amino-acid chain; its full sequence is MSAPLETVMSPCQRLDARTGAAAPPKSLAFSIERIMAKTSEPRAGVFEANQGLESGAKKTLNVCPPVPCMIPIQSLAYDVSPKALLNYSELWRSSIRGSLCGPSALCKSNCGICCKNDFNLSQSLAPSGRVIKPQVINQTLGMPSSGSFYYFNYLESSFHPPDLLNGQLLSSSLINAQSQATLSAHHKLFLLDNSKLSALAADKFPNPQFPHKERLPGQLDQVMKENSALTDRTGKIHTKLSANSGEGKPKIFTCEVCGKVFNAHYNLTRHMPVHTGARPFVCKVCGKGFRQASTLCRHKIIHTQEKPHKCNQCGKAFNRSSTLNTHIRIHAGYKPFVCEFCGKGFHQKGNYKNHKLTHSGEKQYKCSICNKAFHQVYNLTFHMHTHNDKKPFTCATCGKGFCRNFDLKKHVRKLHDNVSSSCSHKEISRTGQS.

The Engrailed homology 1 repressor motif lies at Ser27 to Pro42. 6 consecutive C2H2-type zinc fingers follow at residues Phe253–His275, Phe281–His303, His309–His331, Phe337–His359, Tyr365–His387, and Phe393–His416.

This sequence belongs to the krueppel C2H2-type zinc-finger protein family.

The protein localises to the nucleus. In terms of biological role, transcription repressor. Component of the regulatory cascade that controls the development of dopaminergic (DA) and serotonergic (5HT) neurons. The sequence is that of Fez family zinc finger protein 2 (fezf2) from Xenopus laevis (African clawed frog).